A 189-amino-acid chain; its full sequence is MDVILLERVAKLGHMGDIVRVKNGYARNFLLPGGKALRATEANKKHFESQRAHLETRNQELRDQAAAIGEKLDGQTFVIIRQAGETGQLYGSVSPRDIAEAAIAAGFDVHRNQIALTTPIKTIGLHEVPVVLHPEVSVNVTVNIARSPVEAERQAKGEEINVVEETNLDELGLEIGAALADAGGSLGDR.

This sequence belongs to the bacterial ribosomal protein bL9 family.

In terms of biological role, binds to the 23S rRNA. This chain is Large ribosomal subunit protein bL9, found in Beijerinckia indica subsp. indica (strain ATCC 9039 / DSM 1715 / NCIMB 8712).